Here is a 132-residue protein sequence, read N- to C-terminus: Small heat shock protein hspL (132 aa).

One can recognise a sHSP domain in the interval 15–131 (TFTNFVSAPV…VKMSNNNKVE (117 aa)).

The protein belongs to the small heat shock protein (HSP20) family.

The protein is Small heat shock protein hspL (hspL) of Dictyostelium discoideum (Social amoeba).